The chain runs to 146 residues: Hemoglobin subunit beta (146 aa).

Residue V1 is modified to N-acetylvaline. The 145-residue stretch at 2–146 folds into the Globin domain; sequence HLTNEEKTAV…VATALAHKYH (145 aa). Position 44 is a phosphoserine (S44). At K59 the chain carries N6-acetyllysine. H63 lines the heme b pocket. An N6-acetyllysine modification is found at K82. Residue H92 participates in heme b binding. At C93 the chain carries S-nitrosocysteine. Residue K144 is modified to N6-acetyllysine.

It belongs to the globin family. As to quaternary structure, heterotetramer of two alpha chains and two beta chains. As to expression, red blood cells.

Its function is as follows. Involved in oxygen transport from the lung to the various peripheral tissues. The protein is Hemoglobin subunit beta (HBB) of Lyroderma lyra (Greater Asian false-vampire bat).